A 317-amino-acid polypeptide reads, in one-letter code: E3 ubiquitin-protein ligase NRDP1 (317 aa).

Residues 18–57 (CPICSGVLEEPVQAPHCEHAFCNACITQWFSQQQTCPVDR) form an RING-type; degenerate zinc finger. The SIAH-type; degenerate zinc-finger motif lies at 78 to 138 (KLQIACDNAV…LPNHNCIKHL (61 aa)).

In terms of assembly, interacts with USP8, ERBB3, PRKN and BIRC6. Interacts with CSF2RB, EPOR, IL3RA, MYD88 and TBK1. Interacts with Clec16a. Autoubiquitinated. Autoubiquitination leads to proteasomal degradation. Deubiquitinated by USP8 to get stabilized which induces apoptosis.

The enzyme catalyses S-ubiquitinyl-[E2 ubiquitin-conjugating enzyme]-L-cysteine + [acceptor protein]-L-lysine = [E2 ubiquitin-conjugating enzyme]-L-cysteine + N(6)-ubiquitinyl-[acceptor protein]-L-lysine.. It participates in protein modification; protein ubiquitination. Its function is as follows. Acts as E3 ubiquitin-protein ligase and regulates the degradation of target proteins. Polyubiquitinates MYD88. Negatively regulates MYD88-dependent production of pro-inflammatory cytokines. Can promote TRIF-dependent production of type I interferon and inhibits infection with vesicular stomatitis virus. Also promotes activation of TBK1 and IRF3. Involved in the ubiquitination of erythropoietin (EPO) and interleukin-3 (IL-3) receptors. Thus, through maintaining basal levels of cytokine receptors, RNF41 is involved in the control of hematopoietic progenitor cell differentiation into myeloerythroid lineages. Contributes to the maintenance of steady-state ERBB3 levels by mediating its growth factor-independent degradation. Involved in the degradation of the inhibitor of apoptosis BIRC6 and thus is an important regulator of cell death by promoting apoptosis. Also acts as a PRKN modifier that accelerates its degradation, resulting in a reduction of PRKN activity, influencing the balance of intracellular redox state. The RNF41-PRKN pathway regulates autophagosome-lysosome fusion during late mitophagy. Mitophagy is a selective form of autophagy necessary for mitochondrial quality control. In Mus musculus (Mouse), this protein is E3 ubiquitin-protein ligase NRDP1 (Rnf41).